A 226-amino-acid chain; its full sequence is Ribosomal RNA small subunit methyltransferase G (226 aa).

Residues Gly-83, Phe-88, 136–137, and Arg-152 contribute to the S-adenosyl-L-methionine site; that span reads IE. The segment at 199-226 is disordered; sequence FSPSQSDPEGSVLKVRGLHGPDGQPHRR.

It belongs to the methyltransferase superfamily. RNA methyltransferase RsmG family.

The protein resides in the cytoplasm. It catalyses the reaction guanosine(527) in 16S rRNA + S-adenosyl-L-methionine = N(7)-methylguanosine(527) in 16S rRNA + S-adenosyl-L-homocysteine. Its function is as follows. Specifically methylates the N7 position of guanine in position 527 of 16S rRNA. This is Ribosomal RNA small subunit methyltransferase G from Parvibaculum lavamentivorans (strain DS-1 / DSM 13023 / NCIMB 13966).